The primary structure comprises 216 residues: Ribosomal RNA small subunit methyltransferase G (216 aa).

S-adenosyl-L-methionine is bound by residues G73, L78, 124–125 (AE), and R139.

Belongs to the methyltransferase superfamily. RNA methyltransferase RsmG family.

Its subcellular location is the cytoplasm. Its function is as follows. Specifically methylates the N7 position of guanine in position 518 of 16S rRNA. This chain is Ribosomal RNA small subunit methyltransferase G, found in Pseudarthrobacter chlorophenolicus (strain ATCC 700700 / DSM 12829 / CIP 107037 / JCM 12360 / KCTC 9906 / NCIMB 13794 / A6) (Arthrobacter chlorophenolicus).